Consider the following 129-residue polypeptide: Transcriptional regulator WhiB2 (129 aa).

Residues 23–45 form a disordered region; it reads SHAPHIDTGSTPTGAAGRPQLSL. Positions 66 to 123 constitute a 4Fe-4S Wbl-type domain; that stretch reads LCAQTDPEAFFPEKGGSTREAKRICQGCEVRDACLEYALAHDERFGIWGGLSERERRR. [4Fe-4S] cluster contacts are provided by Cys67, Cys90, Cys93, and Cys99.

Belongs to the WhiB family. It depends on [4Fe-4S] cluster as a cofactor. The Fe-S cluster can be nitrosylated by nitric oxide (NO). In terms of processing, upon Fe-S cluster removal intramolecular disulfide bonds are formed.

The protein localises to the cytoplasm. In terms of biological role, acts as a transcriptional regulator. Probably redox-responsive. The apo- but not holo-form probably binds DNA. This chain is Transcriptional regulator WhiB2 (whiB2), found in Mycolicibacterium smegmatis (strain ATCC 700084 / mc(2)155) (Mycobacterium smegmatis).